The following is a 359-amino-acid chain: CMP-N-acetylneuraminate-poly-alpha-2,8-sialyltransferase (359 aa).

Over 1-7 (MRSIRKR) the chain is Cytoplasmic. The helical; Signal-anchor for type II membrane protein transmembrane segment at 8–20 (WTICTISLLLIFY) threads the bilayer. At 21–359 (KTKEIARTEE…KLTTGKCVKQ (339 aa)) the chain is on the lumenal side. N-linked (GlcNAc...) asparagine glycans are attached at residues N50, N74, and N119. 2 cysteine pairs are disulfide-bonded: C142–C292 and C156–C356. CMP-N-acetyl-beta-neuraminate-binding residues include N147 and N170. N204 and N219 each carry an N-linked (GlcNAc...) asparagine glycan. Residues S279, T280, G281, and W301 each coordinate CMP-N-acetyl-beta-neuraminate. H331 serves as the catalytic Proton donor/acceptor.

Belongs to the glycosyltransferase 29 family. Post-translationally, autopolysialylated.

It is found in the golgi apparatus membrane. It localises to the secreted. The catalysed reaction is [N-acetyl-alpha-D-neuraminosyl-(2-&gt;8)](n) + CMP-N-acetyl-beta-neuraminate = [N-acetyl-alpha-D-neuraminosyl-(2-&gt;8)](n+1) + CMP + H(+). Catalyzes the transfer of a sialic acid from a CMP-linked sialic acid donor onto a terminal alpha-2,3-, alpha-2,6-, or alpha-2,8-linked sialic acid of an N-linked glycan protein acceptor through alpha-2,8-linkages. Therefore, participates in polysialic acid synthesis on various sialylated N-acetyllactosaminyl oligosaccharides, including NCAM1 N-glycans, FETUB N-glycans and AHSG. It is noteworthy that alpha-2,3-linked sialic acid is apparently a better acceptor than alpha-2,6-linked sialic acid. This Pan troglodytes (Chimpanzee) protein is CMP-N-acetylneuraminate-poly-alpha-2,8-sialyltransferase (ST8SIA4).